The sequence spans 120 residues: NAD(P)H-quinone oxidoreductase subunit 3 (120 aa).

3 helical membrane-spanning segments follow: residues 6–26, 64–84, and 89–109; these read GYDAFLGFLLISAAVPILALV, MFALVFVIFDVETVFLYPWAV, and LGLLAFIEALIFIAILLVALA.

This sequence belongs to the complex I subunit 3 family. In terms of assembly, NDH-1 can be composed of about 15 different subunits; different subcomplexes with different compositions have been identified which probably have different functions.

The protein resides in the cellular thylakoid membrane. It carries out the reaction a plastoquinone + NADH + (n+1) H(+)(in) = a plastoquinol + NAD(+) + n H(+)(out). It catalyses the reaction a plastoquinone + NADPH + (n+1) H(+)(in) = a plastoquinol + NADP(+) + n H(+)(out). In terms of biological role, NDH-1 shuttles electrons from an unknown electron donor, via FMN and iron-sulfur (Fe-S) centers, to quinones in the respiratory and/or the photosynthetic chain. The immediate electron acceptor for the enzyme in this species is believed to be plastoquinone. Couples the redox reaction to proton translocation, and thus conserves the redox energy in a proton gradient. Cyanobacterial NDH-1 also plays a role in inorganic carbon-concentration. This chain is NAD(P)H-quinone oxidoreductase subunit 3, found in Prochlorococcus marinus (strain MIT 9313).